Here is a 377-residue protein sequence, read N- to C-terminus: CaM kinase-like vesicle-associated protein (377 aa).

A Protein kinase domain is found at 24 to 287 (YDLGQLIKTE…AADAISHEWI (264 aa)). Residues 324 to 377 (MKRLRAPEQTDPGTPSPSKDSDKTPSMATPAPSPANTPAEGAPSLPCPSPDTTG) are disordered. Over residues 347–362 (TPSMATPAPSPANTPA) the composition is skewed to low complexity. Over residues 368–377 (LPCPSPDTTG) the composition is skewed to pro residues.

Belongs to the protein kinase superfamily. CAMK Ser/Thr protein kinase family. In terms of assembly, interacts with calmodulin, in the presence of calcium. It depends on Ca(2+) as a cofactor.

It localises to the cytoplasmic vesicle membrane. In terms of biological role, does not appear to have detectable kinase activity. In Xenopus laevis (African clawed frog), this protein is CaM kinase-like vesicle-associated protein (camkv).